The sequence spans 308 residues: Cis-prenyltransferase 4, chloroplastic (308 aa).

The N-terminal 45 residues, 1-45 (MAFSLQLQQIFVSYTRFCSQPKSITNPLISLKLPSIHPLAFAQNA), are a transit peptide targeting the chloroplast. Asp-84 is an active-site residue.

The protein belongs to the UPP synthase family. It depends on Mg(2+) as a cofactor. In terms of tissue distribution, widely expressed.

It is found in the plastid. The protein localises to the chloroplast. Uses neryl diphosphate and geranyl diphosphate to catalyze the cis-prenyl chain elongation and produce polyprenyl diphosphate with a chain of 55 carbons. This is Cis-prenyltransferase 4, chloroplastic from Solanum lycopersicum (Tomato).